Consider the following 156-residue polypeptide: ATP synthase subunit b (156 aa).

The helical transmembrane segment at 11–31 (AIAFVLFVLFCMKYVWPPLMA) threads the bilayer.

It belongs to the ATPase B chain family. F-type ATPases have 2 components, F(1) - the catalytic core - and F(0) - the membrane proton channel. F(1) has five subunits: alpha(3), beta(3), gamma(1), delta(1), epsilon(1). F(0) has three main subunits: a(1), b(2) and c(10-14). The alpha and beta chains form an alternating ring which encloses part of the gamma chain. F(1) is attached to F(0) by a central stalk formed by the gamma and epsilon chains, while a peripheral stalk is formed by the delta and b chains.

The protein localises to the cell inner membrane. Its function is as follows. F(1)F(0) ATP synthase produces ATP from ADP in the presence of a proton or sodium gradient. F-type ATPases consist of two structural domains, F(1) containing the extramembraneous catalytic core and F(0) containing the membrane proton channel, linked together by a central stalk and a peripheral stalk. During catalysis, ATP synthesis in the catalytic domain of F(1) is coupled via a rotary mechanism of the central stalk subunits to proton translocation. Component of the F(0) channel, it forms part of the peripheral stalk, linking F(1) to F(0). This Sodalis glossinidius (strain morsitans) protein is ATP synthase subunit b.